A 362-amino-acid polypeptide reads, in one-letter code: Chorismate synthase (362 aa).

Arg-47 is a binding site for NADP(+). Residues Arg-124–Ser-126, Gly-286, Lys-301–Thr-305, and Arg-327 contribute to the FMN site.

It belongs to the chorismate synthase family. In terms of assembly, homotetramer. FMNH2 is required as a cofactor.

It carries out the reaction 5-O-(1-carboxyvinyl)-3-phosphoshikimate = chorismate + phosphate. The protein operates within metabolic intermediate biosynthesis; chorismate biosynthesis; chorismate from D-erythrose 4-phosphate and phosphoenolpyruvate: step 7/7. Its function is as follows. Catalyzes the anti-1,4-elimination of the C-3 phosphate and the C-6 proR hydrogen from 5-enolpyruvylshikimate-3-phosphate (EPSP) to yield chorismate, which is the branch point compound that serves as the starting substrate for the three terminal pathways of aromatic amino acid biosynthesis. This reaction introduces a second double bond into the aromatic ring system. The chain is Chorismate synthase from Synechococcus sp. (strain ATCC 27144 / PCC 6301 / SAUG 1402/1) (Anacystis nidulans).